The primary structure comprises 159 residues: 3-dehydroquinate dehydratase (159 aa).

Tyr22 (proton acceptor) is an active-site residue. Residues Asn73, His79, and Asp86 each coordinate substrate. The active-site Proton donor is the His99. Substrate contacts are provided by residues 100–101 (IS) and Arg110.

It belongs to the type-II 3-dehydroquinase family. As to quaternary structure, homododecamer.

It catalyses the reaction 3-dehydroquinate = 3-dehydroshikimate + H2O. The protein operates within metabolic intermediate biosynthesis; chorismate biosynthesis; chorismate from D-erythrose 4-phosphate and phosphoenolpyruvate: step 3/7. In terms of biological role, catalyzes a trans-dehydration via an enolate intermediate. This chain is 3-dehydroquinate dehydratase, found in Campylobacter jejuni subsp. doylei (strain ATCC BAA-1458 / RM4099 / 269.97).